The chain runs to 818 residues: H(+)/Cl(-) exchange transporter 3 (818 aa).

The Cytoplasmic segment spans residues 1 to 125 (MESEQLFHRG…WEMTKSLYDA (125 aa)). A Di-leucine internalization motif; mediates targeting to late endosome and lysosome membranes motif is present at residues 13 to 17 (RNSYN). Positions 18–19 (SI) match the IP motif; mediates targeting to recycling endosomes motif. 3 consecutive short sequence motifs (di-leucine internalization motif; mediates targeting to late endosome and lysosome membranes) follow at residues 28–29 (LL), 46–47 (LL), and 71–75 (LLDLL). The helical transmembrane segment at 126–163 (WSGWLVVTLTGLASGALAGLIDIAADWMTDLKEGICLS) threads the bilayer. N-linked (GlcNAc...) asparagine glycosylation occurs at Asn-177. Residues 209-232 (MNYIMYIFWALSFAFLAVSLVKVF) traverse the membrane as a helical segment. A Selectivity filter part_1 motif is present at residues 238 to 242 (GSGIP). Ser-239 is a chloride binding site. The segment at residues 241–248 (IPEIKTIL) is an intramembrane region (helical). 2 helical membrane passes run 258–276 (GKWT…VASG) and 282–301 (EGPL…YLFP). The short motif at 280 to 284 (GKEGP) is the Selectivity filter part_2 element. Intramembrane regions (helical) lie at residues 313–325 (VLSA…VSVA) and 329–337 (PIGGVLFSL). The next 3 helical transmembrane spans lie at 349–367 (LWRS…RSIN), 391–416 (FPFI…AWCR), and 423–443 (FGKY…VIAF). N-linked (GlcNAc...) asparagine glycans are attached at residues Asn-451 and Asn-479. 2 helical membrane-spanning segments follow: residues 500–520 (IWQL…TFGI) and 525–544 (GLFI…VGIA). The Selectivity filter part_3 signature appears at 525-529 (GLFIP). A chloride-binding site is contributed by Phe-527. 2 intramembrane regions (helical) span residues 572–586 (GLYA…LGGV) and 590–601 (TVSLVVIVFELT). The note=Loop between two helices intramembrane region spans 602 to 605 (GGLE). Residues 606-624 (YIVPLMAAVMTSKWVGDAF) traverse the membrane as a helical segment. The Cytoplasmic portion of the chain corresponds to 625–818 (GREGIYEAHI…NQDPASIMFN (194 aa)). Residue Tyr-630 participates in chloride binding. CBS domains are found at residues 658 to 722 (MRPR…ARKK) and 755 to 812 (LDMS…NQDP). ATP is bound by residues 689–691 (YNG) and 796–799 (TKKD).

This sequence belongs to the chloride channel (TC 2.A.49) family. ClC-3/CLCN3 subfamily. Monomer and homodimer. Forms heterodimers with CLCN4. Post-translationally, N-glycosylated. In terms of tissue distribution, detected in kidney, in the apical part of proximal tubule cells (at protein level). Expressed at high levels in the kidney while a low level expression is seen in the brain. Within the brain, it is prominent in the hippocampus, cerebral cortex and olfactory bulb. Brain, pancreas, kidney, liver, lung, retina, olfactory bulb, and spinal cord. As to expression, pancreas, kidney, liver, lung and retina. In terms of tissue distribution, brain, heart, pancreas, kidney, liver, lung, retina, olfactory bulb, and spinal cord. Expressed at high levels in the liver and at low levels in the brain.

The protein resides in the cytoplasmic vesicle. The protein localises to the secretory vesicle membrane. It is found in the lysosome membrane. Its subcellular location is the late endosome membrane. It localises to the cell membrane. The protein resides in the early endosome membrane. The protein localises to the recycling endosome membrane. With respect to regulation, inhibited by Cd(2+). Its function is as follows. May influence large dense-core vesicle exocytosis in adrenal chromaffin cells. Functionally, strongly outwardly rectifying, electrogenic H(+)/Cl(-)exchanger which mediates the exchange of chloride ions against protons. The CLC channel family contains both chloride channels and proton-coupled anion transporters that exchange chloride or another anion for protons. The presence of conserved gating glutamate residues is typical for family members that function as antiporters. In terms of biological role, strongly outwardly rectifying, electrogenic H(+)/Cl(-)exchanger which mediates the exchange of chloride ions against protons. Facilitates endosomal acidification and chloride accumulation in hepatocytes. Strongly outwardly rectifying, electrogenic H(+)/Cl(-)exchanger which mediates the exchange of chloride ions against protons. The chain is H(+)/Cl(-) exchange transporter 3 (Clcn3) from Mus musculus (Mouse).